The chain runs to 178 residues: Probable chorismate pyruvate-lyase (178 aa).

Residues Arg72, Leu110, and Glu169 each coordinate substrate.

This sequence belongs to the UbiC family.

It localises to the cytoplasm. The catalysed reaction is chorismate = 4-hydroxybenzoate + pyruvate. It functions in the pathway cofactor biosynthesis; ubiquinone biosynthesis. Its function is as follows. Removes the pyruvyl group from chorismate, with concomitant aromatization of the ring, to provide 4-hydroxybenzoate (4HB) for the ubiquinone pathway. This is Probable chorismate pyruvate-lyase from Nitrosomonas europaea (strain ATCC 19718 / CIP 103999 / KCTC 2705 / NBRC 14298).